Here is a 416-residue protein sequence, read N- to C-terminus: tRNA(Met) cytidine acetate ligase (416 aa).

ATP contacts are provided by residues 7–20 (VVEY…HLHH), G101, N162, and 187–188 (RI).

Belongs to the TmcAL family.

The protein localises to the cytoplasm. It catalyses the reaction cytidine(34) in elongator tRNA(Met) + acetate + ATP = N(4)-acetylcytidine(34) in elongator tRNA(Met) + AMP + diphosphate. In terms of biological role, catalyzes the formation of N(4)-acetylcytidine (ac(4)C) at the wobble position of elongator tRNA(Met), using acetate and ATP as substrates. First activates an acetate ion to form acetyladenylate (Ac-AMP) and then transfers the acetyl group to tRNA to form ac(4)C34. The sequence is that of tRNA(Met) cytidine acetate ligase from Halalkalibacterium halodurans (strain ATCC BAA-125 / DSM 18197 / FERM 7344 / JCM 9153 / C-125) (Bacillus halodurans).